Here is a 432-residue protein sequence, read N- to C-terminus: Enolase (432 aa).

Glutamine 167 contributes to the (2R)-2-phosphoglycerate binding site. The active-site Proton donor is the glutamate 209. The Mg(2+) site is built by aspartate 246, glutamate 289, and aspartate 316. Residues lysine 341, arginine 370, serine 371, and lysine 392 each contribute to the (2R)-2-phosphoglycerate site. The Proton acceptor role is filled by lysine 341.

It belongs to the enolase family. Mg(2+) is required as a cofactor.

The protein localises to the cytoplasm. The protein resides in the secreted. It is found in the cell surface. It carries out the reaction (2R)-2-phosphoglycerate = phosphoenolpyruvate + H2O. It participates in carbohydrate degradation; glycolysis; pyruvate from D-glyceraldehyde 3-phosphate: step 4/5. Catalyzes the reversible conversion of 2-phosphoglycerate (2-PG) into phosphoenolpyruvate (PEP). It is essential for the degradation of carbohydrates via glycolysis. The sequence is that of Enolase from Thermotoga neapolitana (strain ATCC 49049 / DSM 4359 / NBRC 107923 / NS-E).